Reading from the N-terminus, the 456-residue chain is Nuclear distribution protein PAC1 (456 aa).

Residues 9–41 enclose the LisH domain; the sequence is QADELHKSIIAYLSANDLPNTAAALRAELNLTE. Residues 61–88 adopt a coiled-coil conformation; that stretch reads TSIVRLQKKIMDLEARNAALQSELDNLT. 8 WD repeats span residues 114-153, 156-197, 201-240, 243-282, 288-348, 350-389, 394-437, and 439-456; these read SHRD…LEMT, GHTR…KNVR, GHDH…CVRS, GHTG…NPEN, GHEH…LMTL, GHDN…KCVK, AHDR…PDVQ, and RCVI…IFAA.

It belongs to the WD repeat LIS1/nudF family. In terms of assembly, self-associates. Interacts with NDL1 and dynein.

It is found in the cytoplasm. Its subcellular location is the cytoskeleton. It localises to the spindle pole. Positively regulates the activity of the minus-end directed microtubule motor protein dynein. May enhance dynein-mediated microtubule sliding by targeting dynein to the microtubule plus end. Required for nuclear migration during vegetative growth as well as development. Required for retrograde early endosome (EE) transport from the hyphal tip. Required for localization of dynein to the mitotic spindle poles. Recruits additional proteins to the dynein complex at SPBs. The chain is Nuclear distribution protein PAC1 from Ajellomyces capsulatus (strain H143) (Darling's disease fungus).